The sequence spans 305 residues: Glutaminase (305 aa).

Positions 61, 113, 158, 165, 189, 241, and 259 each coordinate substrate.

The protein belongs to the glutaminase family. As to quaternary structure, homotetramer.

The catalysed reaction is L-glutamine + H2O = L-glutamate + NH4(+). The sequence is that of Glutaminase from Alkaliphilus metalliredigens (strain QYMF).